The following is a 1642-amino-acid chain: Cholesterol transporter ABCA5 (1642 aa).

Residues 32-52 traverse the membrane as a helical segment; sequence SVQEILFPLFFLFWLILISMM. N-linked (GlcNAc...) asparagine glycans are attached at residues N86 and N190. 6 helical membrane passes run 220–240, 264–284, 297–317, 327–347, 355–375, and 396–416; these read VILI…AIHI, LSWV…MAVI, IVIF…ALML, VGVV…LIVL, LVWL…AQVM, and LIIT…LAVY. A glycan (N-linked (GlcNAc...) asparagine) is linked at N458. Residues 478-713 enclose the ABC transporter 1 domain; the sequence is IRISGIQKAY…WGIGYRLSMY (236 aa). 514–521 provides a ligand contact to ATP; that stretch reads GHSGTGKS. A helical transmembrane segment spans residues 866–886; that stretch reads LLLLLIFFAVQIFMFLVHHSF. N919 is a glycosylation site (N-linked (GlcNAc...) asparagine). Residues 967 to 987 traverse the membrane as a helical segment; it reads VFTAVFNSTMVYSLPVMMNII. Residue N996 is glycosylated (N-linked (GlcNAc...) asparagine). Transmembrane regions (helical) follow at residues 1021-1041, 1071-1091, 1102-1122, 1139-1159, 1164-1184, and 1207-1227; these read LYFQ…YFAM, VVDI…LFAF, FLAV…FTYI, FIYS…FFLG, AVFH…GCLI, and LLVA…LLQH. An ABC transporter 2 domain is found at 1290–1533; sequence IMVYNLHKEY…FGKGYFLEIK (244 aa). ATP is bound at residue 1333–1340; sequence GPNGAGKS.

It belongs to the ABC transporter superfamily. ABCA family. N-glycosylated. In terms of tissue distribution, expressed in testis, epididymis, lung and brain.

Its subcellular location is the lysosome membrane. The protein resides in the late endosome membrane. The protein localises to the golgi apparatus membrane. It is found in the cell membrane. The catalysed reaction is cholesterol(in) + ATP + H2O = cholesterol(out) + ADP + phosphate + H(+). Its function is as follows. Cholesterol efflux transporter in macrophages that is responsible for APOAI/high-density lipoproteins (HDL) formation at the plasma membrane under high cholesterol levels and participates in reverse cholesterol transport. May play a role in the processing of autolysosomes. The chain is Cholesterol transporter ABCA5 from Rattus norvegicus (Rat).